A 1085-amino-acid chain; its full sequence is DNA mismatch repair protein MutS (1085 aa).

The disordered stretch occupies residues 533–564; that stretch reads DEDLFGEEEQNAPPVGSSNHAVGTQPSADDEA. Residues 548–559 show a composition bias toward polar residues; sequence GSSNHAVGTQPS. Position 812 to 819 (812 to 819) interacts with ATP; sequence GPNMSGKS. Residues 997 to 1042 are disordered; the sequence is ERRAPRSAPPTVPARGDDRRSAGRASSSGAGAARGEQGRTLPDGQL. Residues 1019–1031 are compositionally biased toward low complexity; it reads GRASSSGAGAARG.

The protein belongs to the DNA mismatch repair MutS family.

Functionally, this protein is involved in the repair of mismatches in DNA. It is possible that it carries out the mismatch recognition step. This protein has a weak ATPase activity. This chain is DNA mismatch repair protein MutS, found in Roseiflexus sp. (strain RS-1).